We begin with the raw amino-acid sequence, 900 residues long: Probable beta-mannosidase (900 aa).

Positions 1–21 are cleaved as a signal peptide; that stretch reads MRTSLVVCLFWLLFQLHTTHG. 3 N-linked (GlcNAc...) asparagine glycosylation sites follow: Asn38, Asn42, and Asn131. The Proton donor role is filled by Glu463. N-linked (GlcNAc...) asparagine glycosylation is found at Asn477, Asn576, Asn661, and Asn738.

The protein belongs to the glycosyl hydrolase 2 family.

The protein localises to the lysosome. It carries out the reaction Hydrolysis of terminal, non-reducing beta-D-mannose residues in beta-D-mannosides.. This chain is Probable beta-mannosidase, found in Caenorhabditis elegans.